We begin with the raw amino-acid sequence, 634 residues long: Chaperone protein HtpG (634 aa).

Residues 1 to 344 form an a; substrate-binding region; it reads MSETVSQNKE…SNDLPLNVSR (344 aa). A b region spans residues 345-561; the sequence is EILQDNKVTQ…DYEMGTQMAK (217 aa). The c stretch occupies residues 562-634; it reads LLAAAGQAVP…GAINKLLTKV (73 aa).

Belongs to the heat shock protein 90 family. In terms of assembly, homodimer.

Its subcellular location is the cytoplasm. In terms of biological role, molecular chaperone. Has ATPase activity. This is Chaperone protein HtpG from Vibrio parahaemolyticus serotype O3:K6 (strain RIMD 2210633).